The sequence spans 52 residues: Conotoxin Cal6.36 (52 aa).

Residues 1–22 (MKVTCVLTLAVLILTVGQMVTA) form the signal peptide. 3 disulfides stabilise this stretch: Cys24–Cys39, Cys31–Cys43, and Cys38–Cys47.

As to expression, expressed by the venom duct.

It is found in the secreted. In terms of biological role, probable neurotoxin. The sequence is that of Conotoxin Cal6.36 from Californiconus californicus (California cone).